Here is a 475-residue protein sequence, read N- to C-terminus: Ribulose bisphosphate carboxylase large chain (475 aa).

Positions 1-2 (MS) are excised as a propeptide. Pro-3 bears the N-acetylproline mark. N6,N6,N6-trimethyllysine is present on Lys-14. Substrate is bound by residues Asn-123 and Thr-173. The Proton acceptor role is filled by Lys-175. Lys-177 contributes to the substrate binding site. Positions 201, 203, and 204 each coordinate Mg(2+). Lys-201 is subject to N6-carboxylysine. His-294 serves as the catalytic Proton acceptor. Residues Arg-295, His-327, and Ser-379 each coordinate substrate.

It belongs to the RuBisCO large chain family. Type I subfamily. In terms of assembly, heterohexadecamer of 8 large chains and 8 small chains; disulfide-linked. The disulfide link is formed within the large subunit homodimers. The cofactor is Mg(2+). In terms of processing, the disulfide bond which can form in the large chain dimeric partners within the hexadecamer appears to be associated with oxidative stress and protein turnover.

The protein localises to the plastid. Its subcellular location is the chloroplast. It carries out the reaction 2 (2R)-3-phosphoglycerate + 2 H(+) = D-ribulose 1,5-bisphosphate + CO2 + H2O. The enzyme catalyses D-ribulose 1,5-bisphosphate + O2 = 2-phosphoglycolate + (2R)-3-phosphoglycerate + 2 H(+). RuBisCO catalyzes two reactions: the carboxylation of D-ribulose 1,5-bisphosphate, the primary event in carbon dioxide fixation, as well as the oxidative fragmentation of the pentose substrate in the photorespiration process. Both reactions occur simultaneously and in competition at the same active site. This is Ribulose bisphosphate carboxylase large chain from Corylus cornuta (Beaked hazel).